Reading from the N-terminus, the 178-residue chain is METQGVMKEIQYEEFEEKIIEIRRTSKVTKGGKNLSFRVVAIVGNKNGKVGLGIGKAREVPEAIRKAISAAKRNIIEVPVINGTIPHEIIGRQDASKVLLRPAAPGTGIIAGGTVRAVVELAGIQNILTKSLGSTNPLNLALATMNGLKNLLDPRKVAKLRDISVEEVFKGVRREDNA.

The S5 DRBM domain occupies 15–78 (FEEKIIEIRR…SAAKRNIIEV (64 aa)).

This sequence belongs to the universal ribosomal protein uS5 family. In terms of assembly, part of the 30S ribosomal subunit. Contacts proteins S4 and S8.

With S4 and S12 plays an important role in translational accuracy. Its function is as follows. Located at the back of the 30S subunit body where it stabilizes the conformation of the head with respect to the body. This is Small ribosomal subunit protein uS5 from Thermotoga sp. (strain RQ2).